Reading from the N-terminus, the 559-residue chain is ADP,ATP carrier protein 1 (559 aa).

The span at 1–10 (MNEVENNNHS) shows a compositional bias: polar residues. A disordered region spans residues 1–22 (MNEVENNNHSFPREDIPTEDEI). Asn-8 carries N-linked (GlcNAc...) asparagine glycosylation. 4 consecutive transmembrane segments (helical) span residues 46-66 (FALL…MRIL), 79-99 (TILF…VFLI), 111-131 (IFSI…AVFL), and 174-194 (IVFI…FLSF). The N-linked (GlcNAc...) asparagine glycan is linked to Asn-196. 2 consecutive transmembrane segments (helical) span residues 210-230 (PLII…GAFF) and 242-262 (QVLL…VIFL). The N-linked (GlcNAc...) asparagine glycan is linked to Asn-290. A run of 3 helical transmembrane segments spans residues 305–325 (LLLA…MVES), 354–373 (QYMT…SSYV), and 377–397 (GFLL…VLFL). Asn-403 carries an N-linked (GlcNAc...) asparagine glycan. Helical transmembrane passes span 425 to 447 (YVLE…YSAF), 473 to 493 (IFGK…FEAL), and 503 to 523 (PITA…IIYL).

Belongs to the ADP/ATP translocase tlc family.

Its subcellular location is the cell membrane. ATP transporter involved in the uptake of ATP from the host cell cytoplasm. Provides the microsporidian cell with host ATP in exchange for ADP. This is an obligate exchange system. This energy acquiring activity is an important component of microsporidian parasitism. In Encephalitozoon cuniculi (strain GB-M1) (Microsporidian parasite), this protein is ADP,ATP carrier protein 1 (NTT1).